The sequence spans 160 residues: SsrA-binding protein (160 aa).

Positions 131-160 are disordered; it reads KKEYDKRHTERERDSDRELQRAVRTKGKDD.

The protein belongs to the SmpB family.

The protein resides in the cytoplasm. Its function is as follows. Required for rescue of stalled ribosomes mediated by trans-translation. Binds to transfer-messenger RNA (tmRNA), required for stable association of tmRNA with ribosomes. tmRNA and SmpB together mimic tRNA shape, replacing the anticodon stem-loop with SmpB. tmRNA is encoded by the ssrA gene; the 2 termini fold to resemble tRNA(Ala) and it encodes a 'tag peptide', a short internal open reading frame. During trans-translation Ala-aminoacylated tmRNA acts like a tRNA, entering the A-site of stalled ribosomes, displacing the stalled mRNA. The ribosome then switches to translate the ORF on the tmRNA; the nascent peptide is terminated with the 'tag peptide' encoded by the tmRNA and targeted for degradation. The ribosome is freed to recommence translation, which seems to be the essential function of trans-translation. This is SsrA-binding protein from Pseudomonas syringae pv. tomato (strain ATCC BAA-871 / DC3000).